Consider the following 832-residue polypeptide: WD repeat-containing protein 75 (832 aa).

WD repeat units lie at residues 4-43 (KTDI…KVYS), 47-86 (EEWL…KLWD), 90-134 (GILI…QLVA), 148-187 (KELS…YFFR), 196-233 (LKAT…RLWR), 239-278 (KEYT…VQWQ), 281-320 (DMSK…SIIE), 326-364 (SGLI…QFYS), 378-425 (QQEY…KLWA), 432-474 (SFVL…KAWC), 485-523 (YWSC…TLWS), 527-567 (WELL…CCWN), and 572-609 (ALEW…FVFK). Disordered stretches follow at residues 704-723 (QHKL…HTQG) and 759-811 (VREE…AQER). The segment covering 764–785 (DSSEQEMDSEKEEEESEEEMEA) has biased composition (acidic residues). Residues 799-811 (DEQKPKLSKAQER) show a composition bias toward basic and acidic residues.

Component of the proposed t-UTP subcomplex of the ribosomal small subunit (SSU) processome. SSU processome is composed of more than 70 proteins and the RNA chaperone small nucleolar RNA (snoRNA) U3.

Its subcellular location is the nucleus. It localises to the nucleolus. Ribosome biogenesis factor. Part of the small subunit (SSU) processome, first precursor of the small eukaryotic ribosomal subunit. During the assembly of the SSU processome in the nucleolus, many ribosome biogenesis factors, an RNA chaperone and ribosomal proteins associate with the nascent pre-rRNA and work in concert to generate RNA folding, modifications, rearrangements and cleavage as well as targeted degradation of pre-ribosomal RNA by the RNA exosome. Involved in nucleolar processing of pre-18S ribosomal RNA. Required for optimal pre-ribosomal RNA transcription by RNA polymerase I. This is WD repeat-containing protein 75 (wdr75) from Danio rerio (Zebrafish).